The sequence spans 356 residues: MSTVTITDLARENVRNLTPYQSARRLGGNGDVWLNANEYPTAVEFQLTQQTLNRYPECQPKAVIENYAQYAGVKPEQVLVSRGADEGIELLIRAFCEPGKDSILYCPPTYGMYSVSAETIGVECRTVPTLDNWQLDLQGISDKLDGVKVVYVCSPNNPTGQLINPQDFRTLLELTRGKAIVVADEAYIEFCPQASLAGWLTEYPHLAILRTLSKAFALAGLRCGFTLANEEVINLLMKVIAPYPLSTPVADIAAQALSPQGIVAMRERVAQIIAEREYLIAALKEIPCVEQVFDSETNYILARFKASSAVFKSLWDQGIILRDQNKQPSLSGCLRITVGTREESQRVIDALRAEQV.

At Lys214 the chain carries N6-(pyridoxal phosphate)lysine.

It belongs to the class-II pyridoxal-phosphate-dependent aminotransferase family. Histidinol-phosphate aminotransferase subfamily. Homodimer. It depends on pyridoxal 5'-phosphate as a cofactor.

The enzyme catalyses L-histidinol phosphate + 2-oxoglutarate = 3-(imidazol-4-yl)-2-oxopropyl phosphate + L-glutamate. The protein operates within amino-acid biosynthesis; L-histidine biosynthesis; L-histidine from 5-phospho-alpha-D-ribose 1-diphosphate: step 7/9. The polypeptide is Histidinol-phosphate aminotransferase (Shigella boydii serotype 18 (strain CDC 3083-94 / BS512)).